The chain runs to 131 residues: Arsenate reductase 2 (131 aa).

Active-site nucleophile residues include Cys-10, Cys-82, and Cys-89. Disulfide bonds link Cys-10–Cys-82 and Cys-82–Cys-89.

Belongs to the low molecular weight phosphotyrosine protein phosphatase family. Thioredoxin-coupled ArsC subfamily.

It localises to the cytoplasm. The enzyme catalyses arsenate + [thioredoxin]-dithiol + H(+) = arsenite + [thioredoxin]-disulfide + H2O. In terms of biological role, catalyzes the reduction of arsenate [As(V)] to arsenite [As(III)]. The polypeptide is Arsenate reductase 2 (Staphylococcus haemolyticus (strain JCSC1435)).